Consider the following 396-residue polypeptide: Elongation factor Tu (396 aa).

Positions 10–206 (KPHVNVGTIG…ALDSYIPTPE (197 aa)) constitute a tr-type G domain. The segment at 19-26 (GHVDHGKT) is G1. GTP is bound at residue 19–26 (GHVDHGKT). Residue Thr26 participates in Mg(2+) binding. The tract at residues 60 to 64 (GITIN) is G2. The G3 stretch occupies residues 81–84 (DCPG). GTP contacts are provided by residues 81–85 (DCPGH) and 136–139 (NKCD). The segment at 136 to 139 (NKCD) is G4. Positions 174 to 176 (SAL) are G5.

This sequence belongs to the TRAFAC class translation factor GTPase superfamily. Classic translation factor GTPase family. EF-Tu/EF-1A subfamily. Monomer.

Its subcellular location is the cytoplasm. It carries out the reaction GTP + H2O = GDP + phosphate + H(+). Its function is as follows. GTP hydrolase that promotes the GTP-dependent binding of aminoacyl-tRNA to the A-site of ribosomes during protein biosynthesis. The chain is Elongation factor Tu from Azoarcus sp. (strain BH72).